The sequence spans 156 residues: Ribosome maturation factor RimP (156 aa).

Belongs to the RimP family.

It localises to the cytoplasm. In terms of biological role, required for maturation of 30S ribosomal subunits. In Oenococcus oeni (strain ATCC BAA-331 / PSU-1), this protein is Ribosome maturation factor RimP.